Consider the following 148-residue polypeptide: Large ribosomal subunit protein bL9 (148 aa).

This sequence belongs to the bacterial ribosomal protein bL9 family.

Functionally, binds to the 23S rRNA. This Thermus thermophilus (strain ATCC BAA-163 / DSM 7039 / HB27) protein is Large ribosomal subunit protein bL9.